The primary structure comprises 863 residues: Potassium/sodium hyperpolarization-activated cyclic nucleotide-gated channel 2 (863 aa).

Positions 1–10 are enriched in gly residues; sequence MDARGGGGRP. The interval 1–131 is disordered; sequence MDARGGGGRP…AGPAGEPRGS (131 aa). Topologically, residues 1 to 188 are cytoplasmic; sequence MDARGGGGRP…PYSDFRFYWD (188 aa). The segment covering 17–47 has biased composition (pro residues); the sequence is TPAPGPPPPPPPPAPPQPQPPPAPPPNPTTP. The segment covering 106–128 has biased composition (low complexity); it reads GAASGPAAAEEAGSEEAGPAGEP. Phosphoserine is present on residues serine 119 and serine 134. Residues 131 to 182 form an involved in subunit assembly region; sequence SQASFLQRQFGALLQPGVNKFSLRMFGSQKAVEREQERVKSAGAWIIHPYSD. The chain crosses the membrane as a helical span at residues 189–209; sequence FTMLLFMVGNLIIIPVGITFF. At 210–213 the chain is on the extracellular side; the sequence is KDET. The helical transmembrane segment at 214–234 threads the bilayer; sequence TAPWIVFNVVSDTFFLMDLVL. Over 235–261 the chain is Cytoplasmic; that stretch reads NFRTGIVIEDNTEIILDPEKIKKKYLR. Residues 262-282 traverse the membrane as a helical segment; that stretch reads TWFVVDFVSSIPVDYIFLIVE. Over 283 to 290 the chain is Extracellular; the sequence is KGIDSEVY. Residues 291-311 traverse the membrane as a helical; Voltage-sensor segment; the sequence is KTARALRIVRFTKILSLLRLL. The Cytoplasmic portion of the chain corresponds to 312–342; sequence RLSRLIRYIHQWEEIFHMTYDLASAVMRICN. A helical membrane pass occupies residues 343–363; it reads LISMMLLLCHWDGCLQFLVPM. The Extracellular segment spans residues 364–386; sequence LQDFPSDCWVSINNMVNHSWSEL. N-linked (GlcNAc...) asparagine glycosylation occurs at asparagine 380. The pore-forming intramembrane region spans 387–408; sequence YSFALFKAMSHMLCIGYGRQAP. Residues 409–413 are Extracellular-facing; sequence ESMTD. The chain crosses the membrane as a helical span at residues 414–434; it reads IWLTMLSMIVGATCYAMFIGH. The Cytoplasmic portion of the chain corresponds to 435 to 863; it reads ATALIQSLDS…SARSRLSSNL (429 aa). Glycine 581, glutamate 582, cysteine 584, arginine 591, threonine 592, and arginine 632 together coordinate 3',5'-cyclic AMP. At serine 641 the chain carries Phosphoserine; by PKG/PRKG2. Serine 726 bears the Phosphoserine mark. Arginine 728 carries the omega-N-methylarginine modification. A disordered region spans residues 730–863; sequence VRRAPPGPLP…SARSRLSSNL (134 aa). Over residues 734-755 the composition is skewed to pro residues; it reads PPGPLPPAASPGPPAASPPAAP. Phosphoserine is present on residues serine 743, serine 750, and serine 757. 2 stretches are compositionally biased toward low complexity: residues 756–765 and 778–834; these read SSPRAPRTSP and PALP…AAPS. Residues serine 840, serine 842, and serine 847 each carry the phosphoserine modification.

Belongs to the potassium channel HCN family. Homotetramer. The channel is composed of a homo- or heterotetrameric complex of pore-forming subunits. Heterotetramer with HCN1. Forms an obligate 4:4 complex with accessory subunit PEX5L. Interacts with KCNE2. Post-translationally, phosphorylation at Ser-641 by PRKG2 shifts the voltage-dependence to more negative voltages, hence counteracting the stimulatory effect of cGMP on gating. N-glycosylated; required for cell surface trafficking of HCN2. In terms of processing, S-palmitoylated. Highly expressed in neonatal and adult ventricle and in brain. Highly expressed in the pyramidal layer in hippocampus, in anterior dorsal nucleus in thalamus, in the mammillary nucleus in hypothalamus, in red nucleus, in trigeminal mesencephalic, spinal and principal nuclei, in cochlear and trapezoid nuclei and in the dorsal tegemental nucleus.

The protein localises to the cell membrane. The enzyme catalyses Na(+)(in) = Na(+)(out). It carries out the reaction K(+)(in) = K(+)(out). It catalyses the reaction NH4(+)(in) = NH4(+)(out). Its activity is regulated as follows. Activated by cAMP, and at 10-100 times higher concentrations, also by cGMP. cAMP binding causes a conformation change that leads to the assembly of an active tetramer and channel opening. In the absence of cAMP, the C-terminal region is thought to exert a tonic inhibition on the pore when HCN2 is in a non-tetrameric form. Channel activity is modulated by intracellular chloride ions and pH; acidic pH shifts the activation to more negative voltages. Phosphatidylinositol-4,5- bisphosphate (PIP(2)) acts as a ligand that allosterically opens HCN2 by shifting voltage-dependent channel activation toward depolarized potentials. Inhibited by extracellular cesium ions. In terms of biological role, hyperpolarization-activated ion channel exhibiting weak selectivity for potassium over sodium ions. Contributes to the native pacemaker currents in heart (If) and in neurons (Ih). Can also transport ammonium in the distal nephron. Involved in the initiation of neuropathic pain in sensory neurons. Produces a large instantaneous current. This Rattus norvegicus (Rat) protein is Potassium/sodium hyperpolarization-activated cyclic nucleotide-gated channel 2 (Hcn2).